Here is an 896-residue protein sequence, read N- to C-terminus: Chromatin assembly factor 1 subunit A-A (896 aa).

3 disordered regions span residues 1 to 23, 185 to 377, and 552 to 610; these read MPGK…KKMV, TSTS…EEEK, and DSDE…DPEN. The span at 10-21 shows a compositional bias: polar residues; the sequence is VMQSSTKSNTKK. Residues 211 to 226 are compositionally biased toward low complexity; sequence ASVSSSSSPVSLSSPD. The segment covering 227 to 236 has biased composition (polar residues); sequence AQTGSQFRNR. A compositionally biased stretch (low complexity) spans 237–246; the sequence is SSPSTSTTPT. The segment covering 255–284 has biased composition (basic and acidic residues); it reads SADKNKTKDKDKQRQAEKEERERAKKEARS. Basic residues predominate over residues 285–302; sequence AKKKKRQGLLKNLQRKRG. The span at 308-377 shows a compositional bias: basic and acidic residues; it reads SGKEYKKEKK…EEKRLKEEEK (70 aa). 3 stretches are compositionally biased toward acidic residues: residues 552–563, 572–586, and 595–607; these read DSDEEWEEEEPG, ENDD…DDDG, and SDDE…ECTD. The tract at residues 642–678 is necessary for homodimerization, competence for chromatin assembly; it reads CVWWDSKASEISLLQKFSACILESPAVDEELAQEISS. Residues 724–743 form a disordered region; the sequence is SDAAGNESTSPNVTPQTPSN. The span at 729 to 743 shows a compositional bias: polar residues; sequence NESTSPNVTPQTPSN.

It belongs to the CHAF1A family. Homodimer.

It localises to the nucleus. In terms of biological role, involved in chromatin assembly in DNA replication and DNA repair. This is Chromatin assembly factor 1 subunit A-A (chaf1a-a) from Xenopus laevis (African clawed frog).